Consider the following 519-residue polypeptide: MIFTAFILDYWYFTLLFLIAAYFIGKHVYTNYLMRKHHAEPILDVVDDGAFGFKFGFQSLKAKKIGNQIDLLFLKFNEAKHPSIGTFVTRSFGMQFIATKDPENIKAMLATQFNEYTLGQRLNFLAPLLGKGIFTLDGNGWKHSRAMLRPQFSRDQIGHVKMLEPHFQLLKKHIIKNKGTFFDIQELFFRFTVDSATEFLFGESVSSLKDESIGYDQEEIDFAGRKDFAEAFNKSQVYLSTRTLLQLLYWLVNSADFKRCNKIVHKFSDYYIKKALTATPEELEKHSSYIFLYELAKQTRDPIVLRDQSLNILLAGRDTTAGLLSFAVFELGRNPEVWSKLRQEIGHKFGLDSYSRVEDISFELLKLCEYLKAVLNETLRLYPSVPRNARFAAKNTTLPHGGGPDGMSPILVRKGQTVMYSVYALQRDEKYYGKDANEFRPERWFEPEVRKLGWAFLPFNGGPRICLGQQFALTEASYVLARLIQSFETLELSPEAAYPPAKLSHLTMCLFDGTPVRFE.

Cys-466 is a binding site for heme.

It belongs to the cytochrome P450 family. Requires heme as cofactor.

It is found in the membrane. Functionally, together with an NADPH cytochrome P450 the enzyme system catalyzes the terminal hydroxylation as the first step in the assimilation of alkanes and fatty acids. This is Cytochrome P450 52A10 (CYP52A10) from Candida maltosa (Yeast).